Consider the following 188-residue polypeptide: Probable chemoreceptor glutamine deamidase CheD (188 aa).

Belongs to the CheD family.

The catalysed reaction is L-glutaminyl-[protein] + H2O = L-glutamyl-[protein] + NH4(+). Probably deamidates glutamine residues to glutamate on methyl-accepting chemotaxis receptors (MCPs), playing an important role in chemotaxis. The protein is Probable chemoreceptor glutamine deamidase CheD of Caulobacter sp. (strain K31).